The sequence spans 344 residues: RNA 3'-terminal phosphate cyclase (344 aa).

ATP contacts are provided by residues Q102 and 284–288 (FLGDQ). Catalysis depends on H308, which acts as the Tele-AMP-histidine intermediate.

This sequence belongs to the RNA 3'-terminal cyclase family. Type 1 subfamily.

It is found in the cytoplasm. The enzyme catalyses a 3'-end 3'-phospho-ribonucleotide-RNA + ATP = a 3'-end 2',3'-cyclophospho-ribonucleotide-RNA + AMP + diphosphate. In terms of biological role, catalyzes the conversion of 3'-phosphate to a 2',3'-cyclic phosphodiester at the end of RNA. The mechanism of action of the enzyme occurs in 3 steps: (A) adenylation of the enzyme by ATP; (B) transfer of adenylate to an RNA-N3'P to produce RNA-N3'PP5'A; (C) and attack of the adjacent 2'-hydroxyl on the 3'-phosphorus in the diester linkage to produce the cyclic end product. The biological role of this enzyme is unknown but it is likely to function in some aspects of cellular RNA processing. The chain is RNA 3'-terminal phosphate cyclase from Thermococcus gammatolerans (strain DSM 15229 / JCM 11827 / EJ3).